Reading from the N-terminus, the 293-residue chain is Putative metal ABC transporter substrate-binding protein Hpf (293 aa).

A signal peptide spans 1–22; it reads MRNSFKIMTALALGLFAMQANA. Residues 23 to 48 form an interaction with host components region; sequence KFKVVTTFTVIQDIAQNVAGNAATVE. H58, H123, E189, and D264 together coordinate a divalent metal cation.

It belongs to the bacterial solute-binding protein 9 family. In terms of assembly, interacts with host laminin and vitronectin. Can interact with both immobilized and soluble vitronectin.

The protein localises to the cell outer membrane. It is found in the cell surface. Its subcellular location is the periplasm. Its function is as follows. Part of an ATP-binding cassette (ABC) transport system involved in metal import. Binds a metal with high affinity and specificity and delivers it to the membrane permease for translocation into the cytoplasm. Acts as an adhesin that promotes binding of H.influenzae to host laminin and vitronectin. In addition, interaction with serum vitronectin plays an important role in bacterial serum resistance. In Haemophilus influenzae (strain NTHi 3655), this protein is Putative metal ABC transporter substrate-binding protein Hpf (hpf).